Here is a 136-residue protein sequence, read N- to C-terminus: Large ribosomal subunit protein uL16c (136 aa).

This sequence belongs to the universal ribosomal protein uL16 family. Part of the 50S ribosomal subunit.

The protein resides in the plastid. It localises to the chloroplast. The polypeptide is Large ribosomal subunit protein uL16c (Oryza nivara (Indian wild rice)).